Reading from the N-terminus, the 300-residue chain is MGSSLSNLNDGTNGLAMGPGLGDIPESCVACVFMYLTPPEICNLAGLNRSFRGAASSDSVWEKKLPENYQDLLDLLPPERYHSLSKKDIFAVLSRPIPFDDDNKEVWIDRVTGRVCMAISARGMSITGIEDRRYWNWIPTEESRFHVVAYLQQIWWFEVDGTVRFHLPPGVYSLSFRIHLGRFTKRLGRRVCHFELTHGWDLKPVRFSLSTSDGQEASCEYYLDDVERNEALGKHKRGYWIEYRVGEFIVNGSEPSTEIQWSMKQIDCTHSKGGLCVDSVFINPIGDVKEHKRKAVLKEA.

An F-box domain is found at methionine 17–lysine 63.

This Arabidopsis thaliana (Mouse-ear cress) protein is F-box protein PP2-A15 (PP2A15).